Consider the following 440-residue polypeptide: 3-phosphoshikimate 1-carboxyvinyltransferase (440 aa).

The 3-phosphoshikimate site is built by lysine 26, serine 27, and arginine 31. Lysine 26 is a phosphoenolpyruvate binding site. Positions 99 and 127 each coordinate phosphoenolpyruvate. 3-phosphoshikimate contacts are provided by serine 172, glutamine 174, aspartate 320, and lysine 347. Glutamine 174 contacts phosphoenolpyruvate. Aspartate 320 (proton acceptor) is an active-site residue. Phosphoenolpyruvate contacts are provided by arginine 351 and arginine 392.

It belongs to the EPSP synthase family. In terms of assembly, monomer.

The protein localises to the cytoplasm. The enzyme catalyses 3-phosphoshikimate + phosphoenolpyruvate = 5-O-(1-carboxyvinyl)-3-phosphoshikimate + phosphate. The protein operates within metabolic intermediate biosynthesis; chorismate biosynthesis; chorismate from D-erythrose 4-phosphate and phosphoenolpyruvate: step 6/7. Catalyzes the transfer of the enolpyruvyl moiety of phosphoenolpyruvate (PEP) to the 5-hydroxyl of shikimate-3-phosphate (S3P) to produce enolpyruvyl shikimate-3-phosphate and inorganic phosphate. The polypeptide is 3-phosphoshikimate 1-carboxyvinyltransferase (Xanthomonas oryzae pv. oryzae (strain MAFF 311018)).